The chain runs to 317 residues: 2,3-dihydroxyphenylpropionate/2,3-dihydroxicinnamic acid 1,2-dioxygenase 2 (317 aa).

The active-site Proton donor is the His-115. His-179 acts as the Proton acceptor in catalysis.

It belongs to the LigB/MhpB extradiol dioxygenase family. As to quaternary structure, homotetramer. Fe(2+) serves as cofactor.

It catalyses the reaction 3-(2,3-dihydroxyphenyl)propanoate + O2 = (2Z,4E)-2-hydroxy-6-oxonona-2,4-dienedioate + H(+). The catalysed reaction is (2E)-3-(2,3-dihydroxyphenyl)prop-2-enoate + O2 = (2Z,4E,7E)-2-hydroxy-6-oxonona-2,4,7-trienedioate + H(+). It participates in aromatic compound metabolism; 3-phenylpropanoate degradation. Functionally, catalyzes the non-heme iron(II)-dependent oxidative cleavage of 2,3-dihydroxyphenylpropionic acid and 2,3-dihydroxicinnamic acid into 2-hydroxy-6-ketononadienedioate and 2-hydroxy-6-ketononatrienedioate, respectively. The sequence is that of 2,3-dihydroxyphenylpropionate/2,3-dihydroxicinnamic acid 1,2-dioxygenase 2 from Dechloromonas aromatica (strain RCB).